A 432-amino-acid polypeptide reads, in one-letter code: 3-phosphoshikimate 1-carboxyvinyltransferase (432 aa).

Lys-22, Ser-23, and Arg-27 together coordinate 3-phosphoshikimate. Lys-22 provides a ligand contact to phosphoenolpyruvate. The phosphoenolpyruvate site is built by Gly-96 and Arg-127. 3-phosphoshikimate-binding residues include Ser-173, Ser-174, Gln-175, Ser-201, Asp-316, Asn-339, and Lys-343. Gln-175 contacts phosphoenolpyruvate. Asp-316 (proton acceptor) is an active-site residue. 3 residues coordinate phosphoenolpyruvate: Arg-347, Arg-391, and Lys-416.

Belongs to the EPSP synthase family. As to quaternary structure, monomer.

The protein localises to the cytoplasm. The enzyme catalyses 3-phosphoshikimate + phosphoenolpyruvate = 5-O-(1-carboxyvinyl)-3-phosphoshikimate + phosphate. Its pathway is metabolic intermediate biosynthesis; chorismate biosynthesis; chorismate from D-erythrose 4-phosphate and phosphoenolpyruvate: step 6/7. Catalyzes the transfer of the enolpyruvyl moiety of phosphoenolpyruvate (PEP) to the 5-hydroxyl of shikimate-3-phosphate (S3P) to produce enolpyruvyl shikimate-3-phosphate and inorganic phosphate. The chain is 3-phosphoshikimate 1-carboxyvinyltransferase from Haemophilus influenzae (strain PittGG).